The sequence spans 135 residues: Small ribosomal subunit protein eS6 (135 aa).

It belongs to the eukaryotic ribosomal protein eS6 family.

This is Small ribosomal subunit protein eS6 from Methanococcoides burtonii (strain DSM 6242 / NBRC 107633 / OCM 468 / ACE-M).